Reading from the N-terminus, the 222-residue chain is Dihydrophenazinedicarboxylate synthase (222 aa).

Residue Ser-18 participates in substrate binding. Residues Arg-73–Val-76 and Ser-88–Thr-89 each bind FMN. His-90 provides a ligand contact to substrate. FMN contacts are provided by residues Gln-94 to Lys-95 and Gln-117. Residues Arg-139 and Ser-147 each coordinate substrate. FMN is bound by residues Gln-152 to Ser-153 and Arg-205.

Belongs to the pyridoxamine 5'-phosphate oxidase family. FMN serves as cofactor.

It catalyses the reaction (1R,6R)-1,4,5,5a,6,9-hexahydrophenazine-1,6-dicarboxylate + O2 = (1R,10aS)-1,4,10,10a-tetrahydrophenazine-1,6-dicarboxylate + H2O2. The enzyme catalyses (1R,10aS)-1,4,10,10a-tetrahydrophenazine-1,6-dicarboxylate + O2 = (5aS)-5,5a-dihydrophenazine-1,6-dicarboxylate + H2O2. It carries out the reaction (1R,10aS)-1,4,10,10a-tetrahydrophenazine-1-carboxylate + O2 = (10aS)-10,10a-dihydrophenazine-1-carboxylate + H2O2. The catalysed reaction is (1R)-1,4,5,10-tetrahydrophenazine-1-carboxylate + O2 = (10aS)-10,10a-dihydrophenazine-1-carboxylate + H2O2. It participates in antibiotic biosynthesis; phenazine biosynthesis. Involved in the biosynthesis of the antibiotic phenazine, a nitrogen-containing heterocyclic molecule having important roles in virulence, competition and biological control. Catalyzes several oxidations in the terminal steps of core phenazine biosynthesis. It oxidizes both hexahydrophenazine-1,6-dicarboxylic acid (HHPDC) and tetrahydrophenazine-1-carboxylic acid (THPCA) and thereby contributes to the generation of both phenazine-1,6-dicarboxylic acid (PDC) and phenazine-1-carboxylic acid (PCA). The polypeptide is Dihydrophenazinedicarboxylate synthase (Pseudomonas chlororaphis (Pseudomonas aureofaciens)).